The chain runs to 64 residues: MAQEQTKRTGGGDEDEGSAGPEAAGQERREKLAEDTDDLLDEIDDVLEENAEDFVRAYVQKGGQ.

2 stretches are compositionally biased toward basic and acidic residues: residues 1–11 (MAQEQTKRTGG) and 25–34 (GQERREKLAE). The interval 1–38 (MAQEQTKRTGGGDEDEGSAGPEAAGQERREKLAEDTDD) is disordered. Positions 21 to 58 (PEAAGQERREKLAEDTDDLLDEIDDVLEENAEDFVRAY) are ARC ATPase binding. Residues 24–52 (AGQERREKLAEDTDDLLDEIDDVLEENAE) adopt a coiled-coil conformation. The residue at position 64 (glutamine 64) is a Deamidated glutamine. An Isoglutamyl lysine isopeptide (Gln-Lys) (interchain with K-? in acceptor proteins) cross-link involves residue glutamine 64.

This sequence belongs to the prokaryotic ubiquitin-like protein family. Strongly interacts with the proteasome-associated ATPase ARC through a hydrophobic interface; the interacting region of Pup lies in its C-terminal half. There is one Pup binding site per ARC hexamer ring. Is modified by deamidation of its C-terminal glutamine to glutamate by the deamidase Dop, a prerequisite to the subsequent pupylation process.

It functions in the pathway protein degradation; proteasomal Pup-dependent pathway. Functionally, protein modifier that is covalently attached to lysine residues of substrate proteins, thereby targeting them for proteasomal degradation. The tagging system is termed pupylation. This chain is Prokaryotic ubiquitin-like protein Pup, found in Nocardia farcinica (strain IFM 10152).